Here is a 1169-residue protein sequence, read N- to C-terminus: Rabankyrin-5 (1169 aa).

Position 2 is an N-acetylalanine (Ala2). The 63-residue stretch at 68–130 folds into the BTB domain; the sequence is SDLKIKVGDR…IYTDELEFRE (63 aa). ANK repeat units lie at residues 217 to 247, 255 to 284, 288 to 317, 322 to 362, and 366 to 396; these read KTEY…QLPG, NGDL…DVDM, SGWS…FVNA, AQET…NPNM, and KGRT…DLEL. The residue at position 270 (Ser270) is a Phosphoserine. The NPF signature appears at 421 to 423; that stretch reads NPF. 16 ANK repeats span residues 490 to 519, 542 to 572, 588 to 617, 621 to 650, 654 to 683, 687 to 716, 724 to 753, 769 to 798, 802 to 832, 836 to 865, 870 to 899, 905 to 934, 938 to 967, 971 to 1001, 1005 to 1037, and 1043 to 1072; these read WGET…NPNL, HLQT…ALHA, RDQT…AIND, DGQT…DINV, DGET…DMSV, KGNP…DATC, CLQT…DVNS, DGQT…NVNA, EGRT…HLNV, QGLT…GAAE, KGRN…NVNS, SKLT…KVNE, HRQT…DFAA, NGNN…DAEA, RGQS…GYPL, and DGST…RLGV. The tract at residues 650–759 is interaction with RHOD and RAB5A; the sequence is VRTQDGETAL…DVNSPRQPGA (110 aa). The FYVE-type zinc finger occupies 1104–1164; the sequence is WCDGSYCYEC…VCNICFDVLT (61 aa). Positions 1110, 1113, 1126, 1129, 1134, 1137, 1156, and 1159 each coordinate Zn(2+).

In terms of assembly, interacts with RAB5A (in GTP-bound form). Interacts with RHOD (independent of GTP-loaded status). Interacts with EHD1. Interacts with VPS26A; the interaction is independent of EHD1 and is indicative for an association with the cargo recognition subcomplex of the retromer complex. As to expression, high expression in whole adult brain and intermediate expression in all other tissues and specific brain regions examined, including fetal brain.

The protein resides in the cytoplasm. Its subcellular location is the endosome membrane. The protein localises to the early endosome. Its function is as follows. Proposed effector of Rab5. Binds to phosphatidylinositol 3-phosphate (PI(3)P). Involved in homotypic early endosome fusion and to a lesser extent in heterotypic fusion of chlathrin-coated vesicles with early endosomes. Involved in macropinocytosis; the function is dependent on Rab5-GTP. Required for correct endosomal localization. Involved in the internalization and trafficking of activated tyrosine kinase receptors such as PDGFRB. Regulates the subcellular localization of the retromer complex in a EHD1-dependent manner. Involved in endosome-to-Golgi transport and biosynthetic transport to late endosomes and lysosomes indicative for a regulation of retromer complex-mediated retrograde transport. The protein is Rabankyrin-5 (ANKFY1) of Homo sapiens (Human).